Here is a 429-residue protein sequence, read N- to C-terminus: Enolase (429 aa).

Gln-167 serves as a coordination point for (2R)-2-phosphoglycerate. The active-site Proton donor is the Glu-209. Asp-246, Glu-289, and Asp-316 together coordinate Mg(2+). Positions 341, 370, 371, and 392 each coordinate (2R)-2-phosphoglycerate. Residue Lys-341 is the Proton acceptor of the active site.

The protein belongs to the enolase family. Component of the RNA degradosome, a multiprotein complex involved in RNA processing and mRNA degradation. Requires Mg(2+) as cofactor.

It is found in the cytoplasm. It localises to the secreted. The protein resides in the cell surface. The catalysed reaction is (2R)-2-phosphoglycerate = phosphoenolpyruvate + H2O. The protein operates within carbohydrate degradation; glycolysis; pyruvate from D-glyceraldehyde 3-phosphate: step 4/5. Functionally, catalyzes the reversible conversion of 2-phosphoglycerate (2-PG) into phosphoenolpyruvate (PEP). It is essential for the degradation of carbohydrates via glycolysis. The polypeptide is Enolase (Pseudomonas aeruginosa (strain LESB58)).